A 525-amino-acid polypeptide reads, in one-letter code: Cobyric acid synthase (525 aa).

The GATase cobBQ-type domain occupies glutamate 251–leucine 452. The active-site Nucleophile is cysteine 332. Histidine 444 is a catalytic residue.

It belongs to the CobB/CobQ family. CobQ subfamily.

It functions in the pathway cofactor biosynthesis; adenosylcobalamin biosynthesis. Catalyzes amidations at positions B, D, E, and G on adenosylcobyrinic A,C-diamide. NH(2) groups are provided by glutamine, and one molecule of ATP is hydrogenolyzed for each amidation. The chain is Cobyric acid synthase from Pelotomaculum thermopropionicum (strain DSM 13744 / JCM 10971 / SI).